The sequence spans 209 residues: Prolactin (209 aa).

A signal peptide spans 1–24 (MAQRFKGSNLFLTALLCLASQGHA). 2 disulfides stabilise this stretch: C70–C184 and C201–C209.

The protein belongs to the somatotropin/prolactin family.

The protein resides in the secreted. This chain is Prolactin (prl), found in Anguilla japonica (Japanese eel).